The chain runs to 503 residues: Cobyric acid synthase (503 aa).

One can recognise a GATase cobBQ-type domain in the interval 251–450; sequence DLDIAVIRLP…IHGIFENAAF (200 aa). Cysteine 331 (nucleophile) is an active-site residue. Histidine 442 is a catalytic residue.

The protein belongs to the CobB/CobQ family. CobQ subfamily.

It functions in the pathway cofactor biosynthesis; adenosylcobalamin biosynthesis. In terms of biological role, catalyzes amidations at positions B, D, E, and G on adenosylcobyrinic A,C-diamide. NH(2) groups are provided by glutamine, and one molecule of ATP is hydrogenolyzed for each amidation. The sequence is that of Cobyric acid synthase from Dehalococcoides mccartyi (strain ATCC BAA-2100 / JCM 16839 / KCTC 5957 / BAV1).